The chain runs to 754 residues: Neprilysin-1 (754 aa).

The chain crosses the membrane as a helical; Signal-anchor for type II membrane protein span at residues 5–27; that stretch reads FGPPIVFLISCYALILCGTVDAL. Residues Asn38, Asn81, Asn132, Asn217, Asn273, Asn303, and Asn441 are each glycosylated (N-linked (GlcNAc...) asparagine). The Peptidase M13 domain occupies 63–754; that stretch reads VGDSEGYQEA…MNPTKRCVVW (692 aa). Intrachain disulfides connect Cys87-Cys739, Cys95-Cys699, Cys151-Cys414, and Cys624-Cys751. His587 is a binding site for Zn(2+). The active site involves Glu588. His591 contacts Zn(2+). The N-linked (GlcNAc...) asparagine glycan is linked to Asn612. Glu649 contacts Zn(2+). Asp653 functions as the Proton donor in the catalytic mechanism.

The protein belongs to the peptidase M13 family. The cofactor is Zn(2+). As to expression, specifically expressed in pharyngeal cells and a single head neuron.

Its subcellular location is the membrane. Probable cell surface protease. Required to control the neuronal innervation of pharyngeal pumping. This chain is Neprilysin-1 (nep-1), found in Caenorhabditis elegans.